A 237-amino-acid chain; its full sequence is Chloride intracellular channel protein 3 (237 aa).

Residues 1–89 (MAETTKLQLF…EEFLEETLGP (89 aa)) form a required for insertion into the membrane region. Positions 13–91 (ASEDGESVGH…FLEETLGPPD (79 aa)) constitute a GST N-terminal domain. The G-site signature appears at 23-26 (CPSC). A disulfide bridge connects residues C23 and C26. Residues 25–45 (SCQRLFMVLLLKGVPFTLTTV) traverse the membrane as a helical segment. The GST C-terminal domain occupies 69 to 236 (DGDVKTDTLQ…LAAYQPAVHP (168 aa)). Residue S160 is modified to Phosphoserine.

The protein belongs to the chloride channel CLIC family. In terms of assembly, associated with the C-terminal of MAPK15.

It is found in the nucleus. The protein localises to the membrane. The protein resides in the cell membrane. It localises to the cytoplasm. Its subcellular location is the secreted. It is found in the extracellular space. The protein localises to the extracellular matrix. It carries out the reaction chloride(in) = chloride(out). In the soluble state, catalyzes glutaredoxin-like thiol disulfide exchange reactions with reduced glutathione as electron donor. Reduced in a glutathione-dependent way and secreted into the extracellular matrix where it activates TGM2 and promotes blood vessel growth during tissue remodeling as occurs in tumorigenesis. Can reduce specific cysteines in TGM2 and regulate cofactor binding. Can insert into membranes and form outwardly rectifying chloride ion channels. May participate in cellular growth control. In Mus musculus (Mouse), this protein is Chloride intracellular channel protein 3.